The following is a 512-amino-acid chain: Cobyric acid synthase (512 aa).

The region spanning 251–451 (ALDIAVIRLP…IHGLFDSHHF (201 aa)) is the GATase cobBQ-type domain. The Nucleophile role is filled by Cys332. The active site involves His443.

Belongs to the CobB/CobQ family. CobQ subfamily.

The protein operates within cofactor biosynthesis; adenosylcobalamin biosynthesis. Its function is as follows. Catalyzes amidations at positions B, D, E, and G on adenosylcobyrinic A,C-diamide. NH(2) groups are provided by glutamine, and one molecule of ATP is hydrogenolyzed for each amidation. The sequence is that of Cobyric acid synthase from Yersinia enterocolitica serotype O:8 / biotype 1B (strain NCTC 13174 / 8081).